The chain runs to 209 residues: Uracil phosphoribosyltransferase (209 aa).

Residues Arg79, Arg104, and 131–139 (DPMLATGGS) each bind 5-phospho-alpha-D-ribose 1-diphosphate. Residues Ile194 and 199–201 (GDA) contribute to the uracil site. Position 200 (Asp200) interacts with 5-phospho-alpha-D-ribose 1-diphosphate.

It belongs to the UPRTase family. The cofactor is Mg(2+).

It carries out the reaction UMP + diphosphate = 5-phospho-alpha-D-ribose 1-diphosphate + uracil. It participates in pyrimidine metabolism; UMP biosynthesis via salvage pathway; UMP from uracil: step 1/1. With respect to regulation, allosterically activated by GTP. Its function is as follows. Catalyzes the conversion of uracil and 5-phospho-alpha-D-ribose 1-diphosphate (PRPP) to UMP and diphosphate. This is Uracil phosphoribosyltransferase from Ligilactobacillus salivarius (strain UCC118) (Lactobacillus salivarius).